A 143-amino-acid chain; its full sequence is uncharacterized protein (143 aa).

A disordered region spans residues 13 to 143; it reads SLQFPHHRPG…QDAAHQCRIQ (131 aa). Residues 17–31 are compositionally biased toward basic residues; sequence PHHRPGLRRHRKNTT. 3 stretches are compositionally biased toward basic and acidic residues: residues 35–48, 84–96, and 112–133; these read AAVD…RGDA, DGRE…AEEK, and EKQH…DHAG. A compositionally biased stretch (low complexity) spans 134–143; sequence QDAAHQCRIQ.

This is an uncharacterized protein from Homo sapiens (Human).